Consider the following 340-residue polypeptide: Guanine nucleotide-binding protein G(I)/G(S)/G(T) subunit beta-3 (340 aa).

WD repeat units follow at residues 53-83 (GHLAKIYAMHWATDSKLLVSASQDGKLIVWD), 95-125 (LRSSWVMTCAYAPSGNFVACGGLDNMCSIYS), 141-170 (AHTGYLSCCRFLDDNNIVTSSGDTTCALWD), 182-212 (GHTGDCMSLAVSPDYKLFISGACDASAKLWD), 224-254 (GHESDINAICFFPNGEAICTGSDDASCRLFD), 268-298 (SIICGITSVAFSLSGRLLFAGYDDFNCNVWD), and 310-340 (GHDNRVSCLGVTADGMAVATGSWDSFLKIWN).

This sequence belongs to the WD repeat G protein beta family. As to quaternary structure, g proteins are composed of 3 units, alpha, beta and gamma. Interacts with RASD2. Expressed at a high level in the heart and at a much lower level in the brain.

In terms of biological role, guanine nucleotide-binding proteins (G proteins) are involved as a modulator or transducer in various transmembrane signaling systems. The beta and gamma chains are required for the GTPase activity, for replacement of GDP by GTP, and for G protein-effector interaction. In Rattus norvegicus (Rat), this protein is Guanine nucleotide-binding protein G(I)/G(S)/G(T) subunit beta-3 (Gnb3).